The following is a 179-amino-acid chain: Putative invertase inhibitor (179 aa).

The signal sequence occupies residues 1-23 (MKLSFSLCIFFFNLLLLLQAVIS). Disulfide bonds link cysteine 31/cysteine 46 and cysteine 102/cysteine 142.

This sequence belongs to the PMEI family. In terms of assembly, monomer. Post-translationally, not glycosylated. As to expression, expressed in pollen (at protein level). Expressed in stem, but not leaves (at protein level). Expressed in pollen.

The protein localises to the secreted. It is found in the cell wall. It localises to the endoplasmic reticulum. Its function is as follows. Invertase inhibitor. This is Putative invertase inhibitor from Platanus acerifolia (London plane tree).